Here is an 875-residue protein sequence, read N- to C-terminus: DNA topoisomerase 3-beta (875 aa).

Positions 3 to 153 (SVLMVAEKPS…QVTYRAHFSA (151 aa)) constitute a Toprim domain. The region spanning 170–589 (NENEAKSVDA…AIKIFKLKFM (420 aa)) is the Topo IA-type catalytic domain. The active-site O-(5'-phospho-DNA)-tyrosine intermediate is Y332. A disordered region spans residues 371–391 (QTPRKGKDAGDHPPITPMKLG).

It belongs to the type IA topoisomerase family.

It carries out the reaction ATP-independent breakage of single-stranded DNA, followed by passage and rejoining.. Releases the supercoiling and torsional tension of DNA introduced during the DNA replication and transcription by transiently cleaving and rejoining one strand of the DNA duplex. Introduces a single-strand break via transesterification at a target site in duplex DNA. The scissile phosphodiester is attacked by the catalytic tyrosine of the enzyme, resulting in the formation of a DNA-(5'-phosphotyrosyl)-enzyme intermediate and the expulsion of a 3'-OH DNA strand. The free DNA strand than undergoes passage around the unbroken strand thus removing DNA supercoils. Finally, in the religation step, the DNA 3'-OH attacks the covalent intermediate to expel the active-site tyrosine and restore the DNA phosphodiester backbone. Weakly relaxes negative supercoils and displays a distinct preference for binding single-stranded DNA. This chain is DNA topoisomerase 3-beta (Top3beta), found in Drosophila melanogaster (Fruit fly).